The following is a 122-amino-acid chain: Large ribosomal subunit protein bL12 (122 aa).

The protein belongs to the bacterial ribosomal protein bL12 family. In terms of assembly, homodimer. Part of the ribosomal stalk of the 50S ribosomal subunit. Forms a multimeric L10(L12)X complex, where L10 forms an elongated spine to which 2 to 4 L12 dimers bind in a sequential fashion. Binds GTP-bound translation factors.

Forms part of the ribosomal stalk which helps the ribosome interact with GTP-bound translation factors. Is thus essential for accurate translation. The protein is Large ribosomal subunit protein bL12 of Yersinia pseudotuberculosis serotype O:1b (strain IP 31758).